The chain runs to 406 residues: Acetate kinase (406 aa).

Asn-8 contributes to the Mg(2+) binding site. Position 15 (Lys-15) interacts with ATP. A substrate-binding site is contributed by Arg-92. Residue Asp-149 is the Proton donor/acceptor of the active site. ATP contacts are provided by residues 209–213, 283–285, and 331–335; these read HLGNG, DFR, and GVGEN. Glu-385 serves as a coordination point for Mg(2+).

This sequence belongs to the acetokinase family. In terms of assembly, homodimer. Requires Mg(2+) as cofactor. It depends on Mn(2+) as a cofactor.

The protein localises to the cytoplasm. The enzyme catalyses acetate + ATP = acetyl phosphate + ADP. It functions in the pathway metabolic intermediate biosynthesis; acetyl-CoA biosynthesis; acetyl-CoA from acetate: step 1/2. Functionally, catalyzes the formation of acetyl phosphate from acetate and ATP. Can also catalyze the reverse reaction. This Corynebacterium aurimucosum (strain ATCC 700975 / DSM 44827 / CIP 107346 / CN-1) (Corynebacterium nigricans) protein is Acetate kinase.